Reading from the N-terminus, the 100-residue chain is uncharacterized protein (100 aa).

This is an uncharacterized protein from Enterobacteria phage T4 (Bacteriophage T4).